The sequence spans 165 residues: 6,7-dimethyl-8-ribityllumazine synthase (165 aa).

5-amino-6-(D-ribitylamino)uracil-binding positions include Phe-24, 62 to 64, and 86 to 88; these read AFE and AVI. 91–92 serves as a coordination point for (2S)-2-hydroxy-3-oxobutyl phosphate; sequence DT. His-94 functions as the Proton donor in the catalytic mechanism. Residue Phe-119 coordinates 5-amino-6-(D-ribitylamino)uracil. Arg-133 is a binding site for (2S)-2-hydroxy-3-oxobutyl phosphate.

Belongs to the DMRL synthase family.

It carries out the reaction (2S)-2-hydroxy-3-oxobutyl phosphate + 5-amino-6-(D-ribitylamino)uracil = 6,7-dimethyl-8-(1-D-ribityl)lumazine + phosphate + 2 H2O + H(+). It participates in cofactor biosynthesis; riboflavin biosynthesis; riboflavin from 2-hydroxy-3-oxobutyl phosphate and 5-amino-6-(D-ribitylamino)uracil: step 1/2. Catalyzes the formation of 6,7-dimethyl-8-ribityllumazine by condensation of 5-amino-6-(D-ribitylamino)uracil with 3,4-dihydroxy-2-butanone 4-phosphate. This is the penultimate step in the biosynthesis of riboflavin. This is 6,7-dimethyl-8-ribityllumazine synthase from Prochlorococcus marinus (strain MIT 9303).